The primary structure comprises 1507 residues: Nonribosomal peptide synthetase ataP (1507 aa).

One can recognise a Carrier 1 domain in the interval M1–Y72. O-(pantetheine 4'-phosphoryl)serine is present on S33. A disordered region spans residues T98 to T119. Residues G105 to T115 show a composition bias toward low complexity. The tract at residues T163–L429 is condensation 1. Residues A514–R893 form an adenylation region. The Carrier 2 domain occupies N988–Q1065. The residue at position 1025 (S1025) is an O-(pantetheine 4'-phosphoryl)serine. Positions T1099–N1471 are condensation 2.

It belongs to the NRP synthetase family.

It functions in the pathway mycotoxin biosynthesis. Functionally, nonribosomal peptide synthetase; part of the gene cluster that mediates the biosynthesis of acetylaranotin, a member of the epipolythiodioxopiperazine (ETP) class of toxins characterized by a disulfide-bridged cyclic dipeptide. The first step of acetylaranotin biosynthesis is performed by the NRPS ataP which produces diketopiperazine cyclo-L-Phe-L-Phe via the condensation of 2 phenylalanines (L-Phe). The ataC domain of ataTC then catalyzes the formation of bishydroxylation of cyclo-L-Phe-L-Phe. The glutathione S-transferase domain ataG in ataIMG further catalyzes the conjugation of two glutathiones to the bishydroxylated intermediate. Next, the dipeptidase ataJ removes the Glu residues. The following step is performed by the carbon sulfur lyase domain ataI of ataIMG which may convert the bis-cysteinyl adduct to yield an epidithiol intermediate. The ataT domain from ataTC then catalyzes the oxidation of the free dithiols, followed by a cyclization step catalyzed by the cytochrome P450 ataF. AtaF probably acts as an epoxidase to promote a dual epoxidation formation at C8 and C9 along with C8' and C9', followed by the spontaneous nucleophilic attack of the amide nitrogens N10 and N10' to yield an intermediate with the pyrrolidine partial structure. The final steps of acetylaranotin biosynthesis involve the acetylation and ring rearrangement of an epitetrathiodiketopiperazine intermediate to produce acetylaranotin. AtaH probably catalyzes the acetylation of epitetrathiodiketopiperazine to produce a diacetate and ataY is responsible for the formation of the dihydrooxepin moiety that converts the diacetate intermediate to acetylaranotin via acetylapoaranotin. Both enzymes could function independently in the absence of the other. The acetylaranotin bis-thiomethyltransferase ataS located outside of acetylaranotin gene cluster is the main thiomethyltransferase responsible for converting acetylaranotin and its related intermediates to their methylated forms. The chain is Nonribosomal peptide synthetase ataP from Aspergillus terreus (strain NIH 2624 / FGSC A1156).